The primary structure comprises 429 residues: Adenylosuccinate synthetase (429 aa).

GTP is bound by residues 12 to 18 and 40 to 42; these read GDEGKGK and GHT. Asp13 acts as the Proton acceptor in catalysis. Positions 13 and 40 each coordinate Mg(2+). Residues 13–16, 38–41, Thr129, Arg143, Gln224, Thr239, and Arg303 contribute to the IMP site; these read DEGK and NAGH. Residue His41 is the Proton donor of the active site. A substrate-binding site is contributed by 299–305; the sequence is ATTGRKR. GTP contacts are provided by residues Arg305, 331–333, and 413–415; these read KLD and SVG.

This sequence belongs to the adenylosuccinate synthetase family. In terms of assembly, homodimer. Mg(2+) serves as cofactor.

The protein resides in the cytoplasm. It carries out the reaction IMP + L-aspartate + GTP = N(6)-(1,2-dicarboxyethyl)-AMP + GDP + phosphate + 2 H(+). It participates in purine metabolism; AMP biosynthesis via de novo pathway; AMP from IMP: step 1/2. In terms of biological role, plays an important role in the de novo pathway of purine nucleotide biosynthesis. Catalyzes the first committed step in the biosynthesis of AMP from IMP. The chain is Adenylosuccinate synthetase from Desulfosudis oleivorans (strain DSM 6200 / JCM 39069 / Hxd3) (Desulfococcus oleovorans).